The following is a 579-amino-acid chain: Chromosomal replication initiator protein DnaA (579 aa).

The interval 1–71 is domain I, interacts with DnaA modulators; sequence MQDFWQAAAA…TALACEYWET (71 aa). Positions 71–242 are domain II; sequence TQVSVHFVLD…QQSDTVHERS (172 aa). 2 disordered regions span residues 131-196 and 212-240; these read AGAQ…SAAH and EASA…TVHE. A compositionally biased stretch (low complexity) spans 171–183; it reads SQSQQSAQGRGAA. Residues 243-459 form a domain III, AAA+ region region; that stretch reads RLNPILTFDN…GALRKILAFS (217 aa). The ATP site is built by Gly-287, Gly-289, Lys-290, and Thr-291. The interval 460-579 is domain IV, binds dsDNA; the sequence is NFHGKDITID…LHVLEQTLKG (120 aa).

The protein belongs to the DnaA family. In terms of assembly, oligomerizes as a right-handed, spiral filament on DNA at oriC.

It localises to the cytoplasm. In terms of biological role, plays an essential role in the initiation and regulation of chromosomal replication. ATP-DnaA binds to the origin of replication (oriC) to initiate formation of the DNA replication initiation complex once per cell cycle. Binds the DnaA box (a 9 base pair repeat at the origin) and separates the double-stranded (ds)DNA. Forms a right-handed helical filament on oriC DNA; dsDNA binds to the exterior of the filament while single-stranded (ss)DNA is stabiized in the filament's interior. The ATP-DnaA-oriC complex binds and stabilizes one strand of the AT-rich DNA unwinding element (DUE), permitting loading of DNA polymerase. After initiation quickly degrades to an ADP-DnaA complex that is not apt for DNA replication. Binds acidic phospholipids. This Cupriavidus metallidurans (strain ATCC 43123 / DSM 2839 / NBRC 102507 / CH34) (Ralstonia metallidurans) protein is Chromosomal replication initiator protein DnaA.